A 179-amino-acid polypeptide reads, in one-letter code: Large ribosomal subunit protein uL6 (179 aa).

This sequence belongs to the universal ribosomal protein uL6 family. In terms of assembly, part of the 50S ribosomal subunit.

In terms of biological role, this protein binds to the 23S rRNA, and is important in its secondary structure. It is located near the subunit interface in the base of the L7/L12 stalk, and near the tRNA binding site of the peptidyltransferase center. This chain is Large ribosomal subunit protein uL6, found in Mycobacteroides abscessus (strain ATCC 19977 / DSM 44196 / CCUG 20993 / CIP 104536 / JCM 13569 / NCTC 13031 / TMC 1543 / L948) (Mycobacterium abscessus).